Consider the following 250-residue polypeptide: 5'-nucleotidase SurE (250 aa).

Asp-8, Asp-9, Ser-39, and Asn-95 together coordinate a divalent metal cation.

This sequence belongs to the SurE nucleotidase family. A divalent metal cation serves as cofactor.

The protein resides in the cytoplasm. It carries out the reaction a ribonucleoside 5'-phosphate + H2O = a ribonucleoside + phosphate. In terms of biological role, nucleotidase that shows phosphatase activity on nucleoside 5'-monophosphates. This Cupriavidus taiwanensis (strain DSM 17343 / BCRC 17206 / CCUG 44338 / CIP 107171 / LMG 19424 / R1) (Ralstonia taiwanensis (strain LMG 19424)) protein is 5'-nucleotidase SurE.